Reading from the N-terminus, the 332-residue chain is Casein kinase I isoform 2 (332 aa).

A Protein kinase domain is found at 11–282; sequence FRIGQKIGSG…YLKRLFRELF (272 aa). ATP contacts are provided by residues 17–25 and lysine 40; that span reads IGSGSFGEI. The active-site Proton acceptor is the aspartate 133. A disordered region spans residues 306–332; the sequence is EGRADQQQQQQQQQQRRGSEKEDEHPV. Positions 311–320 are enriched in low complexity; that stretch reads QQQQQQQQQQ. Positions 322 to 332 are enriched in basic and acidic residues; that stretch reads RGSEKEDEHPV.

This sequence belongs to the protein kinase superfamily. Ser/Thr protein kinase family. The cofactor is Mg(2+).

It catalyses the reaction L-seryl-[protein] + ATP = O-phospho-L-seryl-[protein] + ADP + H(+). It carries out the reaction L-threonyl-[protein] + ATP = O-phospho-L-threonyl-[protein] + ADP + H(+). Functionally, serine/threonine protein kinase. May phosphorylate ZC3H11 during unstressed conditions, leading to proteasome-dependent degradation of ZC3H11. In Trypanosoma brucei brucei, this protein is Casein kinase I isoform 2.